Here is a 262-residue protein sequence, read N- to C-terminus: Type III pantothenate kinase (262 aa).

10–17 provides a ligand contact to ATP; it reads DIGNTTTV. 110 to 113 lines the substrate pocket; the sequence is GADR. The Proton acceptor role is filled by aspartate 112. Residue aspartate 134 participates in K(+) binding. Residue threonine 137 participates in ATP binding. Threonine 189 is a binding site for substrate.

Belongs to the type III pantothenate kinase family. In terms of assembly, homodimer. The cofactor is NH4(+). K(+) is required as a cofactor.

It localises to the cytoplasm. It carries out the reaction (R)-pantothenate + ATP = (R)-4'-phosphopantothenate + ADP + H(+). The protein operates within cofactor biosynthesis; coenzyme A biosynthesis; CoA from (R)-pantothenate: step 1/5. Functionally, catalyzes the phosphorylation of pantothenate (Pan), the first step in CoA biosynthesis. This Deinococcus radiodurans (strain ATCC 13939 / DSM 20539 / JCM 16871 / CCUG 27074 / LMG 4051 / NBRC 15346 / NCIMB 9279 / VKM B-1422 / R1) protein is Type III pantothenate kinase.